The following is a 1396-amino-acid chain: DNA-directed RNA polymerase subunit beta' (1396 aa).

Positions 72, 74, 87, and 90 each coordinate Zn(2+). The Mg(2+) site is built by aspartate 463, aspartate 465, and aspartate 467. Zn(2+)-binding residues include cysteine 814, cysteine 889, cysteine 896, and cysteine 899.

It belongs to the RNA polymerase beta' chain family. In terms of assembly, the RNAP catalytic core consists of 2 alpha, 1 beta, 1 beta' and 1 omega subunit. When a sigma factor is associated with the core the holoenzyme is formed, which can initiate transcription. Mg(2+) serves as cofactor. Zn(2+) is required as a cofactor.

It carries out the reaction RNA(n) + a ribonucleoside 5'-triphosphate = RNA(n+1) + diphosphate. DNA-dependent RNA polymerase catalyzes the transcription of DNA into RNA using the four ribonucleoside triphosphates as substrates. This is DNA-directed RNA polymerase subunit beta' from Chlamydia trachomatis serovar L2 (strain ATCC VR-902B / DSM 19102 / 434/Bu).